The sequence spans 726 residues: Procollagen-lysine,2-oxoglutarate 5-dioxygenase 1 (726 aa).

A signal peptide spans 1–18; it reads MRLLLLLAPLGWLLLAET. N-linked (GlcNAc...) asparagine glycans are attached at residues Asn196 and Asn537. One can recognise a Fe2OG dioxygenase domain in the interval 635–726; the sequence is QFDLAFVVRY…RYIAVSFVDP (92 aa). Residues His655 and Asp657 each coordinate Fe cation. A glycan (N-linked (GlcNAc...) asparagine) is linked at Asn685. His707 lines the Fe cation pocket. Arg717 is a catalytic residue.

In terms of assembly, homodimer. Identified in a complex with P3H3 and P3H4. Fe(2+) serves as cofactor. The cofactor is L-ascorbate.

Its subcellular location is the rough endoplasmic reticulum membrane. It catalyses the reaction L-lysyl-[collagen] + 2-oxoglutarate + O2 = (5R)-5-hydroxy-L-lysyl-[collagen] + succinate + CO2. Part of a complex composed of PLOD1, P3H3 and P3H4 that catalyzes hydroxylation of lysine residues in collagen alpha chains and is required for normal assembly and cross-linkling of collagen fibrils. Forms hydroxylysine residues in -Xaa-Lys-Gly- sequences in collagens. These hydroxylysines serve as sites of attachment for carbohydrate units and are essential for the stability of the intermolecular collagen cross-links. This is Procollagen-lysine,2-oxoglutarate 5-dioxygenase 1 (PLOD1) from Bos taurus (Bovine).